A 291-amino-acid polypeptide reads, in one-letter code: Pituitary-specific positive transcription factor 1 (291 aa).

The short motif at 5–13 is the 9aaTAD element; that stretch reads PFTSADTFI. Positions 124 to 198 constitute a POU-specific domain; sequence MDSPEIRELE…ILSKWLEEAE (75 aa). Positions 214–273 form a DNA-binding region, homeobox; sequence KRKRRTTISIAAKDALERHFGEQNKPSSQEILRMAEELNLEKEVVRVWFCNRRQREKRVK.

It belongs to the POU transcription factor family. Class-1 subfamily. As to quaternary structure, interacts with PITX1. Interacts with LHX3. Interacts with ELK1.

The protein localises to the nucleus. Functionally, transcription factor involved in the specification of the lactotrope, somatotrope, and thyrotrope phenotypes in the developing anterior pituitary. Activates growth hormone and prolactin genes. Specifically binds to the consensus sequence 5'-TAAAT-3'. This is Pituitary-specific positive transcription factor 1 (POU1F1) from Sus scrofa (Pig).